The sequence spans 685 residues: Sorbicillinoid biosynthetic cluster transcription factor sor4 (685 aa).

A compositionally biased stretch (low complexity) spans 1–14 (MGSSATATTTGEST). The segment at 1 to 20 (MGSSATATTTGESTRQQPGL) is disordered. A DNA-binding region (zn(2)-C6 fungal-type) is located at residues 22–49 (CEECRRRKARCDRVRPKCGICADSGRNC). Residues 81-112 (GQNDAPSLPQERDSLGCPTPSEKVSPEGDLVS) are disordered.

The protein localises to the nucleus. In terms of biological role, transcription factor that acts as the main regulator of the gene cluster that mediates the biosynthesis of sorbicillinoids, a diverse group of yellow secondary metabolites that restrict growth of competing pathogenic fungi but not of bacteria. The protein is Sorbicillinoid biosynthetic cluster transcription factor sor4 of Hypocrea jecorina (strain QM6a) (Trichoderma reesei).